We begin with the raw amino-acid sequence, 226 residues long: uncharacterized protein (226 aa).

This is an uncharacterized protein from Caenorhabditis elegans.